We begin with the raw amino-acid sequence, 511 residues long: Maturase K (511 aa).

The protein belongs to the intron maturase 2 family. MatK subfamily.

It localises to the plastid. Its subcellular location is the chloroplast. In terms of biological role, usually encoded in the trnK tRNA gene intron. Probably assists in splicing its own and other chloroplast group II introns. The protein is Maturase K of Pistia stratiotes (Water lettuce).